The sequence spans 246 residues: Adenosylcobinamide-GDP ribazoletransferase (246 aa).

The next 6 membrane-spanning stretches (helical) occupy residues 37-57 (FPAV…AGAL), 64-84 (ALAA…DGLA), 100-122 (LLAV…LQLL), 139-159 (ALVL…WWLM), 185-205 (LAAA…VLWW), and 223-243 (AGIE…GLWI).

It belongs to the CobS family. Mg(2+) is required as a cofactor.

The protein localises to the cell inner membrane. The enzyme catalyses alpha-ribazole + adenosylcob(III)inamide-GDP = adenosylcob(III)alamin + GMP + H(+). It catalyses the reaction alpha-ribazole 5'-phosphate + adenosylcob(III)inamide-GDP = adenosylcob(III)alamin 5'-phosphate + GMP + H(+). It participates in cofactor biosynthesis; adenosylcobalamin biosynthesis; adenosylcobalamin from cob(II)yrinate a,c-diamide: step 7/7. Joins adenosylcobinamide-GDP and alpha-ribazole to generate adenosylcobalamin (Ado-cobalamin). Also synthesizes adenosylcobalamin 5'-phosphate from adenosylcobinamide-GDP and alpha-ribazole 5'-phosphate. In Novosphingobium aromaticivorans (strain ATCC 700278 / DSM 12444 / CCUG 56034 / CIP 105152 / NBRC 16084 / F199), this protein is Adenosylcobinamide-GDP ribazoletransferase.